The chain runs to 358 residues: Uptake hydrogenase small subunit (358 aa).

Positions 1-45 (MSRLETFYDVMRRQGITRRSFLKYCSLTAAALGLGPAFAPRIAHA) form a signal peptide, tat-type signal. [4Fe-4S] cluster-binding residues include cysteine 62, cysteine 65, cysteine 160, cysteine 194, histidine 232, cysteine 235, cysteine 260, and cysteine 266. [3Fe-4S] cluster contacts are provided by cysteine 275, cysteine 294, and cysteine 297.

Belongs to the [NiFe]/[NiFeSe] hydrogenase small subunit family. In terms of assembly, heterodimer of a large and a small subunit. [4Fe-4S] cluster is required as a cofactor. It depends on [3Fe-4S] cluster as a cofactor. In terms of processing, predicted to be exported by the Tat system. The position of the signal peptide cleavage has been experimentally proven.

Its subcellular location is the cell membrane. The enzyme catalyses H2 + A = AH2. Its function is as follows. This enzyme recycles the H(2) produced by nitrogenase to increase the production of ATP and to protect nitrogenase against inhibition or damage by O(2) under carbon- or phosphate-limited conditions. The polypeptide is Uptake hydrogenase small subunit (hoxK) (Azotobacter vinelandii).